Consider the following 571-residue polypeptide: Membrane protein insertase YidC (571 aa).

Residues 4–24 (TRVFLIFAWLMVAVLLWMEWS) form a helical membrane-spanning segment. The tract at residues 29 to 76 (APTPAPTTTSAPAAAQSVPGATPGSVPNAQVPGAPGQAAVQAQASATP) is disordered. Composition is skewed to low complexity over residues 34–43 (PTTTSAPAAA) and 57–76 (AQVP…SATP). The next 4 helical transmembrane spans lie at 369 to 389 (LVGN…LVLY), 440 to 460 (GGCL…WVLV), 483 to 503 (YFIL…LTPA), and 518 to 538 (PLVF…YWVV).

The protein belongs to the OXA1/ALB3/YidC family. Type 1 subfamily. As to quaternary structure, interacts with the Sec translocase complex via SecD. Specifically interacts with transmembrane segments of nascent integral membrane proteins during membrane integration.

It is found in the cell inner membrane. Required for the insertion and/or proper folding and/or complex formation of integral membrane proteins into the membrane. Involved in integration of membrane proteins that insert both dependently and independently of the Sec translocase complex, as well as at least some lipoproteins. Aids folding of multispanning membrane proteins. This Stenotrophomonas maltophilia (strain R551-3) protein is Membrane protein insertase YidC.